A 313-amino-acid polypeptide reads, in one-letter code: Porphobilinogen deaminase (313 aa).

The residue at position 242 (cysteine 242) is an S-(dipyrrolylmethanemethyl)cysteine.

The protein belongs to the HMBS family. As to quaternary structure, monomer. It depends on dipyrromethane as a cofactor.

The catalysed reaction is 4 porphobilinogen + H2O = hydroxymethylbilane + 4 NH4(+). Its pathway is porphyrin-containing compound metabolism; protoporphyrin-IX biosynthesis; coproporphyrinogen-III from 5-aminolevulinate: step 2/4. Its function is as follows. Tetrapolymerization of the monopyrrole PBG into the hydroxymethylbilane pre-uroporphyrinogen in several discrete steps. This chain is Porphobilinogen deaminase, found in Escherichia coli O6:H1 (strain CFT073 / ATCC 700928 / UPEC).